We begin with the raw amino-acid sequence, 327 residues long: Elongation factor P--(R)-beta-lysine ligase (327 aa).

A substrate-binding site is contributed by 78 to 80 (SPE). Residues 102-104 (RNQ) and asparagine 111 each bind ATP. Position 120 (tyrosine 120) interacts with substrate. 246–247 (EL) is an ATP binding site. Glutamate 253 serves as a coordination point for substrate. Glycine 302 contacts ATP.

Belongs to the class-II aminoacyl-tRNA synthetase family. EpmA subfamily. As to quaternary structure, homodimer.

The enzyme catalyses D-beta-lysine + L-lysyl-[protein] + ATP = N(6)-((3R)-3,6-diaminohexanoyl)-L-lysyl-[protein] + AMP + diphosphate + H(+). Its function is as follows. With EpmB is involved in the beta-lysylation step of the post-translational modification of translation elongation factor P (EF-P). Catalyzes the ATP-dependent activation of (R)-beta-lysine produced by EpmB, forming a lysyl-adenylate, from which the beta-lysyl moiety is then transferred to the epsilon-amino group of a conserved specific lysine residue in EF-P. The chain is Elongation factor P--(R)-beta-lysine ligase from Baumannia cicadellinicola subsp. Homalodisca coagulata.